Reading from the N-terminus, the 311-residue chain is MQIRLANPRGFCAGVDRAIDIVNRALEVFGPPIHVRHEVVHNRYVVEDLRQRGAVFVEELHEVPDDAIVIFSAHGVSKAVQEEAKRRQLQVFDATCPLVTKVHMEVIRYAREGRESILIGHAGHPEVEGTMGQYDKSYGGDIYLVEDEADVVALTVRDESKLAFVTQTTLSVDDTARVIDALRQRFPAIIGPKREDICYATTNRQDAVRQLALECGLVLVVGSVNSSNSNRLRELAERCGAEAYLIDEPSQIEASWLKGKAAVGVTAGASAPEDLVQQVIATLKNLGGEDAEEIPGREENIRFSMPKALRP.

Position 12 (C12) interacts with [4Fe-4S] cluster. H41 and H74 together coordinate (2E)-4-hydroxy-3-methylbut-2-enyl diphosphate. Residues H41 and H74 each coordinate dimethylallyl diphosphate. Residues H41 and H74 each coordinate isopentenyl diphosphate. C96 contacts [4Fe-4S] cluster. H124 is a binding site for (2E)-4-hydroxy-3-methylbut-2-enyl diphosphate. H124 contacts dimethylallyl diphosphate. Residue H124 participates in isopentenyl diphosphate binding. The active-site Proton donor is E126. A (2E)-4-hydroxy-3-methylbut-2-enyl diphosphate-binding site is contributed by T168. A [4Fe-4S] cluster-binding site is contributed by C198. Residues S226, S227, N228, and S270 each coordinate (2E)-4-hydroxy-3-methylbut-2-enyl diphosphate. Dimethylallyl diphosphate contacts are provided by S226, S227, N228, and S270. Residues S226, S227, N228, and S270 each coordinate isopentenyl diphosphate.

Belongs to the IspH family. Requires [4Fe-4S] cluster as cofactor.

It catalyses the reaction isopentenyl diphosphate + 2 oxidized [2Fe-2S]-[ferredoxin] + H2O = (2E)-4-hydroxy-3-methylbut-2-enyl diphosphate + 2 reduced [2Fe-2S]-[ferredoxin] + 2 H(+). The enzyme catalyses dimethylallyl diphosphate + 2 oxidized [2Fe-2S]-[ferredoxin] + H2O = (2E)-4-hydroxy-3-methylbut-2-enyl diphosphate + 2 reduced [2Fe-2S]-[ferredoxin] + 2 H(+). Its pathway is isoprenoid biosynthesis; dimethylallyl diphosphate biosynthesis; dimethylallyl diphosphate from (2E)-4-hydroxy-3-methylbutenyl diphosphate: step 1/1. It functions in the pathway isoprenoid biosynthesis; isopentenyl diphosphate biosynthesis via DXP pathway; isopentenyl diphosphate from 1-deoxy-D-xylulose 5-phosphate: step 6/6. Its function is as follows. Catalyzes the conversion of 1-hydroxy-2-methyl-2-(E)-butenyl 4-diphosphate (HMBPP) into a mixture of isopentenyl diphosphate (IPP) and dimethylallyl diphosphate (DMAPP). Acts in the terminal step of the DOXP/MEP pathway for isoprenoid precursor biosynthesis. The chain is 4-hydroxy-3-methylbut-2-enyl diphosphate reductase from Alcanivorax borkumensis (strain ATCC 700651 / DSM 11573 / NCIMB 13689 / SK2).